A 214-amino-acid polypeptide reads, in one-letter code: Holliday junction branch migration complex subunit RuvA (214 aa).

The interval 1 to 63 is domain I; the sequence is MISSLRGTVL…EDSLTLFGFP (63 aa). Residues 64 to 139 form a domain II region; the sequence is GPDELRAFEL…KLFVTQPRTR (76 aa). A flexible linker region spans residues 139 to 143; sequence RSASS. The tract at residues 144–214 is domain III; sequence AASTVTADVV…APAAAQAADR (71 aa).

This sequence belongs to the RuvA family. As to quaternary structure, homotetramer. Forms an RuvA(8)-RuvB(12)-Holliday junction (HJ) complex. HJ DNA is sandwiched between 2 RuvA tetramers; dsDNA enters through RuvA and exits via RuvB. An RuvB hexamer assembles on each DNA strand where it exits the tetramer. Each RuvB hexamer is contacted by two RuvA subunits (via domain III) on 2 adjacent RuvB subunits; this complex drives branch migration. In the full resolvosome a probable DNA-RuvA(4)-RuvB(12)-RuvC(2) complex forms which resolves the HJ.

Its subcellular location is the cytoplasm. The RuvA-RuvB-RuvC complex processes Holliday junction (HJ) DNA during genetic recombination and DNA repair, while the RuvA-RuvB complex plays an important role in the rescue of blocked DNA replication forks via replication fork reversal (RFR). RuvA specifically binds to HJ cruciform DNA, conferring on it an open structure. The RuvB hexamer acts as an ATP-dependent pump, pulling dsDNA into and through the RuvAB complex. HJ branch migration allows RuvC to scan DNA until it finds its consensus sequence, where it cleaves and resolves the cruciform DNA. The chain is Holliday junction branch migration complex subunit RuvA from Clavibacter sepedonicus (Clavibacter michiganensis subsp. sepedonicus).